The following is a 371-amino-acid chain: Peptide chain release factor 2 (371 aa).

An N5-methylglutamine modification is found at Gln-252.

It belongs to the prokaryotic/mitochondrial release factor family. Methylated by PrmC. Methylation increases the termination efficiency of RF2.

It localises to the cytoplasm. Functionally, peptide chain release factor 2 directs the termination of translation in response to the peptide chain termination codons UGA and UAA. This Staphylococcus haemolyticus (strain JCSC1435) protein is Peptide chain release factor 2.